A 186-amino-acid polypeptide reads, in one-letter code: Peptidyl-tRNA hydrolase (186 aa).

Tyr-13 contacts tRNA. His-18 functions as the Proton acceptor in the catalytic mechanism. Tyr-59, Asn-61, and Asn-107 together coordinate tRNA.

This sequence belongs to the PTH family. In terms of assembly, monomer.

Its subcellular location is the cytoplasm. The catalysed reaction is an N-acyl-L-alpha-aminoacyl-tRNA + H2O = an N-acyl-L-amino acid + a tRNA + H(+). In terms of biological role, hydrolyzes ribosome-free peptidyl-tRNAs (with 1 or more amino acids incorporated), which drop off the ribosome during protein synthesis, or as a result of ribosome stalling. Catalyzes the release of premature peptidyl moieties from peptidyl-tRNA molecules trapped in stalled 50S ribosomal subunits, and thus maintains levels of free tRNAs and 50S ribosomes. The chain is Peptidyl-tRNA hydrolase from Thermotoga petrophila (strain ATCC BAA-488 / DSM 13995 / JCM 10881 / RKU-1).